A 330-amino-acid chain; its full sequence is Tryptophan--tRNA ligase (330 aa).

Residues 6–8 (QPT) and 14–15 (GN) contribute to the ATP site. Positions 7–15 (PTGSLHLGN) match the 'HIGH' region motif. Residue D130 coordinates L-tryptophan. Residues 142-144 (GED), V185, and 194-198 (KMSKS) contribute to the ATP site. A 'KMSKS' region motif is present at residues 194-198 (KMSKS).

This sequence belongs to the class-I aminoacyl-tRNA synthetase family. In terms of assembly, homodimer.

The protein resides in the cytoplasm. It carries out the reaction tRNA(Trp) + L-tryptophan + ATP = L-tryptophyl-tRNA(Trp) + AMP + diphosphate + H(+). Catalyzes the attachment of tryptophan to tRNA(Trp). The protein is Tryptophan--tRNA ligase of Thermosynechococcus vestitus (strain NIES-2133 / IAM M-273 / BP-1).